We begin with the raw amino-acid sequence, 588 residues long: Succinate dehydrogenase flavoprotein subunit (588 aa).

FAD is bound by residues 14–19, 37–52, and Asp-221; these read GAGGAG and SKVF…AQGG. Tele-8alpha-FAD histidine is present on His-45. Substrate is bound by residues His-242 and Thr-254. The active-site Proton acceptor is the Arg-286. Residue His-354 coordinates substrate. Glu-388 lines the FAD pocket. Arg-399 contacts substrate. Residue 404–405 participates in FAD binding; it reads SL.

This sequence belongs to the FAD-dependent oxidoreductase 2 family. FRD/SDH subfamily. As to quaternary structure, part of an enzyme complex containing four subunits: a flavoprotein, an iron-sulfur, cytochrome b-556, and a hydrophobic anchor protein. Requires FAD as cofactor.

The protein resides in the cell inner membrane. The enzyme catalyses a quinone + succinate = fumarate + a quinol. It participates in carbohydrate metabolism; tricarboxylic acid cycle; fumarate from succinate (bacterial route): step 1/1. Two distinct, membrane-bound, FAD-containing enzymes are responsible for the catalysis of fumarate and succinate interconversion; the fumarate reductase is used in anaerobic growth, and the succinate dehydrogenase is used in aerobic growth. This Salmonella typhimurium (strain LT2 / SGSC1412 / ATCC 700720) protein is Succinate dehydrogenase flavoprotein subunit (sdhA).